The following is a 1174-amino-acid chain: HEAT repeat-containing protein 6 (1174 aa).

One copy of the HEAT 1 repeat lies at Asn-168 to Gly-207. Disordered regions lie at residues Gly-304–Lys-346 and Leu-373–Phe-392. Basic residues predominate over residues Ser-323–Gly-335. Residues His-336–Lys-346 show a composition bias toward basic and acidic residues. 3 HEAT repeats span residues Gly-460–Gln-498, Ser-523–Tyr-560, and Gly-566–Ser-603. The segment at Ser-619–His-648 is disordered. Over residues Glu-631–His-648 the composition is skewed to basic and acidic residues.

The polypeptide is HEAT repeat-containing protein 6 (heatr6) (Xenopus laevis (African clawed frog)).